A 383-amino-acid polypeptide reads, in one-letter code: Processive diacylglycerol beta-glucosyltransferase (383 aa).

This sequence belongs to the glycosyltransferase 28 family. UgtP subfamily.

It is found in the cell membrane. It carries out the reaction a 1,2-diacyl-3-O-(beta-D-glucopyranosyl)-sn-glycerol + UDP-alpha-D-glucose = a 1,2-diacyl-3-O-(beta-D-Glc-(1-&gt;6)-beta-D-Glc)-sn-glycerol + UDP + H(+). It catalyses the reaction a 1,2-diacyl-3-O-(beta-D-Glc-(1-&gt;6)-beta-D-Glc)-sn-glycerol + UDP-alpha-D-glucose = a 1,2-diacyl-3-O-(beta-D-Glc-(1-&gt;6)-beta-D-Glc-(1-&gt;6)-beta-D-Glc)-sn-glycerol + UDP + H(+). The catalysed reaction is a 1,2-diacyl-sn-glycerol + UDP-alpha-D-glucose = a 1,2-diacyl-3-O-(beta-D-glucopyranosyl)-sn-glycerol + UDP + H(+). Its pathway is glycolipid metabolism; diglucosyl-diacylglycerol biosynthesis. Its function is as follows. Processive glucosyltransferase involved in the biosynthesis of both the bilayer- and non-bilayer-forming membrane glucolipids. Is able to successively transfer up to three glucosyl residues to diacylglycerol (DAG), thereby catalyzing the formation of beta-monoglucosyl-DAG (3-O-(beta-D-glucopyranosyl)-1,2-diacyl-sn-glycerol), beta-diglucosyl-DAG (3-O-(beta-D-glucopyranosyl-beta-(1-&gt;6)-D-glucopyranosyl)-1,2-diacyl-sn-glycerol) and beta-triglucosyl-DAG (3-O-(beta-D-glucopyranosyl-beta-(1-&gt;6)-D-glucopyranosyl-beta-(1-&gt;6)-D-glucopyranosyl)-1,2-diacyl-sn-glycerol). Beta-diglucosyl-DAG is the predominant glycolipid found in Bacillales and is also used as a membrane anchor for lipoteichoic acid (LTA). The sequence is that of Processive diacylglycerol beta-glucosyltransferase from Bacillus licheniformis (strain ATCC 14580 / DSM 13 / JCM 2505 / CCUG 7422 / NBRC 12200 / NCIMB 9375 / NCTC 10341 / NRRL NRS-1264 / Gibson 46).